The primary structure comprises 246 residues: UPF0246 protein stu1967 (246 aa).

Belongs to the UPF0246 family.

This chain is UPF0246 protein stu1967, found in Streptococcus thermophilus (strain ATCC BAA-250 / LMG 18311).